A 272-amino-acid chain; its full sequence is Flt3 receptor-interacting lectin (272 aa).

A signal peptide spans 1 to 8; sequence MFPSKVKS. Positions 94 and 112 each coordinate alpha-D-mannopyranose. N-linked (GlcNAc...) asparagine glycans are attached at residues Asn125 and Asn131. Residues Asn152 and 237 to 238 contribute to the alpha-D-mannopyranose site; that span reads QD.

This sequence belongs to the leguminous lectin family. As to quaternary structure, dimer (alpha/beta)2. Tetramer (alpha/beta)4. Glycosylated at Asn-125 by either a paucimannose type N-glycan (alpha-4) or a single N-acetylglucosamine (alpha-3). Glycosylated at Asn-131 by a paucimannose type N-glycan (alpha-2, alpha-3 and alpha-4). In alpha-2, Asn-125 is deamidated to an Asp, possibly due to the action of intrinsic peptide N-glycosidase (PGNase).

It localises to the protein storage vacuole lumen. Its function is as follows. Mannose-binding lectin. Accommodates most effectively a non-reducing terminal alpha-d-mannosyl unit. Strongly precipitates murine IgM but not IgG. This is Flt3 receptor-interacting lectin from Lablab purpureus (Hyacinth bean).